We begin with the raw amino-acid sequence, 433 residues long: GTPase Der (433 aa).

EngA-type G domains follow at residues lysine 3–isoleucine 167 and proline 175–arginine 349. GTP-binding positions include glycine 9 to serine 16, aspartate 56 to tyrosine 60, asparagine 119 to aspartate 122, glycine 181 to serine 188, aspartate 228 to isoleucine 232, and asparagine 293 to aspartate 296. Residues leucine 350–lysine 433 enclose the KH-like domain.

The protein belongs to the TRAFAC class TrmE-Era-EngA-EngB-Septin-like GTPase superfamily. EngA (Der) GTPase family. As to quaternary structure, associates with the 50S ribosomal subunit.

GTPase that plays an essential role in the late steps of ribosome biogenesis. The chain is GTPase Der from Karelsulcia muelleri (strain GWSS) (Sulcia muelleri).